Reading from the N-terminus, the 222-residue chain is ER membrane protein complex subunit 7 homolog (222 aa).

A signal peptide spans 1-16 (MKSILLLFSLIVLGSA). At 17–145 (TEEVSRTEQT…RKREEWRITD (129 aa)) the chain is on the extracellular side. A helical transmembrane segment spans residues 146–166 (MLFSPMVLMLVVPLVVMLILP). Topologically, residues 167–222 (KMTANDPELKKEMENMQMPKVDMPDVGEMMANFFGGSAPAKKKAVTGGSGSGQRRK) are cytoplasmic.

This sequence belongs to the EMC7 family.

The protein resides in the membrane. This is ER membrane protein complex subunit 7 homolog from Caenorhabditis elegans.